The primary structure comprises 127 residues: Large ribosomal subunit protein bL19 (127 aa).

This sequence belongs to the bacterial ribosomal protein bL19 family.

Functionally, this protein is located at the 30S-50S ribosomal subunit interface and may play a role in the structure and function of the aminoacyl-tRNA binding site. In Myxococcus xanthus (strain DK1622), this protein is Large ribosomal subunit protein bL19.